Consider the following 297-residue polypeptide: N-acetylmuramic acid 6-phosphate etherase (297 aa).

One can recognise an SIS domain in the interval 55–218 (AAAALKSGGR…STGAMVKFGK (164 aa)). Residue Glu83 is the Proton donor of the active site. Glu114 is an active-site residue.

Belongs to the GCKR-like family. MurNAc-6-P etherase subfamily. In terms of assembly, homodimer.

It carries out the reaction N-acetyl-D-muramate 6-phosphate + H2O = N-acetyl-D-glucosamine 6-phosphate + (R)-lactate. It functions in the pathway amino-sugar metabolism; 1,6-anhydro-N-acetylmuramate degradation. It participates in amino-sugar metabolism; N-acetylmuramate degradation. Its pathway is cell wall biogenesis; peptidoglycan recycling. Its function is as follows. Specifically catalyzes the cleavage of the D-lactyl ether substituent of MurNAc 6-phosphate, producing GlcNAc 6-phosphate and D-lactate. Together with AnmK, is also required for the utilization of anhydro-N-acetylmuramic acid (anhMurNAc) either imported from the medium or derived from its own cell wall murein, and thus plays a role in cell wall recycling. This chain is N-acetylmuramic acid 6-phosphate etherase, found in Salmonella paratyphi A (strain ATCC 9150 / SARB42).